A 199-amino-acid chain; its full sequence is NAD(P)H dehydrogenase (quinone) (199 aa).

The region spanning 4-190 (MLVLYYSAYG…DGARFQGRRV (187 aa)) is the Flavodoxin-like domain. FMN is bound by residues 10 to 15 (SAYGHM) and 78 to 80 (TRY). An NAD(+)-binding site is contributed by Tyr-12. Trp-98 provides a ligand contact to substrate. FMN is bound by residues 113–119 (STATQYG) and His-134. Residues 162-181 (GMTTTADGDGSRQPSAQELD) form a disordered region. Polar residues predominate over residues 163-177 (MTTTADGDGSRQPSA).

It belongs to the WrbA family. FMN serves as cofactor.

It carries out the reaction a quinone + NADH + H(+) = a quinol + NAD(+). The enzyme catalyses a quinone + NADPH + H(+) = a quinol + NADP(+). The chain is NAD(P)H dehydrogenase (quinone) from Brucella suis (strain ATCC 23445 / NCTC 10510).